Consider the following 407-residue polypeptide: E3 ubiquitin-protein ligase IE2 (407 aa).

The span at 1–10 shows a compositional bias: polar residues; that stretch reads MSRQINAATP. The tract at residues 1–69 is disordered; sequence MSRQINAATP…RVSEENVQII (69 aa). A compositionally biased stretch (basic residues) spans 13–25; the sequence is SRHHRLSLSRRRI. Residues 31–47 are compositionally biased toward low complexity; that stretch reads SEAQPSSSSRSQTSSSS. A coiled-coil region spans residues 127-158; that stretch reads QQYQNNIASETAAQRALQRALDLEAQLMNEIA. The disordered stretch occupies residues 179–200; it reads QSPDLFASPQSSEQQQQSEPEE. Over residues 186-196 the composition is skewed to low complexity; sequence SPQSSEQQQQS. An RING-type; degenerate zinc finger spans residues 206 to 254; sequence CNICFTTFKDTKNVNSSFVTTTHCNHAVCFKCYVKIIMANSVYKCFCSA. Residues 336-393 adopt a coiled-coil conformation; sequence LKHKHAVAELDLQKANYDLQESTKKSEELQSTVNNLQEQLNKQVVESQAKFLEFERNN.

The protein belongs to the alphabaculovirus IE2 protein family. As to quaternary structure, homooligomer. Post-translationally, auto-ubiquitinated.

The protein localises to the host nucleus. It catalyses the reaction S-ubiquitinyl-[E2 ubiquitin-conjugating enzyme]-L-cysteine + [acceptor protein]-L-lysine = [E2 ubiquitin-conjugating enzyme]-L-cysteine + N(6)-ubiquitinyl-[acceptor protein]-L-lysine.. RING-finger E3 ubiquitin ligase that plays an important regulatory role during the initial stages of infection. Migrates to specific nuclear foci early in infection supposely to prepare the sites for viral replication by targeting and ubiquitinating host proteins. The polypeptide is E3 ubiquitin-protein ligase IE2 (IE2) (Rachiplusia ou multiple nucleopolyhedrovirus (strain R1) (RoMNPV)).